The following is a 94-amino-acid chain: Cell division topological specificity factor (94 aa).

The protein belongs to the MinE family.

Prevents the cell division inhibition by proteins MinC and MinD at internal division sites while permitting inhibition at polar sites. This ensures cell division at the proper site by restricting the formation of a division septum at the midpoint of the long axis of the cell. This chain is Cell division topological specificity factor, found in Alkalilimnicola ehrlichii (strain ATCC BAA-1101 / DSM 17681 / MLHE-1).